The sequence spans 151 residues: Small ribosomal subunit protein uS15 (151 aa).

The protein belongs to the universal ribosomal protein uS15 family. Component of the small ribosomal subunit. Mature ribosomes consist of a small (40S) and a large (60S) subunit. The 40S subunit contains about 32 different proteins and 1 molecule of RNA (18S). The 60S subunit contains 45 different proteins and 3 molecules of RNA (25S, 5.8S and 5S).

It is found in the cytoplasm. Component of the ribosome, a large ribonucleoprotein complex responsible for the synthesis of proteins in the cell. The small ribosomal subunit (SSU) binds messenger RNAs (mRNAs) and translates the encoded message by selecting cognate aminoacyl-transfer RNA (tRNA) molecules. The large subunit (LSU) contains the ribosomal catalytic site termed the peptidyl transferase center (PTC), which catalyzes the formation of peptide bonds, thereby polymerizing the amino acids delivered by tRNAs into a polypeptide chain. The nascent polypeptides leave the ribosome through a tunnel in the LSU and interact with protein factors that function in enzymatic processing, targeting, and the membrane insertion of nascent chains at the exit of the ribosomal tunnel. This Candida albicans (strain SC5314 / ATCC MYA-2876) (Yeast) protein is Small ribosomal subunit protein uS15 (RPS13).